A 326-amino-acid chain; its full sequence is Beta-ketoacyl-[acyl-carrier-protein] synthase III (326 aa).

Active-site residues include C112 and H251. The ACP-binding stretch occupies residues 252–256 (QANSR). The active site involves N281.

The protein belongs to the thiolase-like superfamily. FabH family. As to quaternary structure, homodimer.

It localises to the cytoplasm. It carries out the reaction malonyl-[ACP] + acetyl-CoA + H(+) = 3-oxobutanoyl-[ACP] + CO2 + CoA. Its pathway is lipid metabolism; fatty acid biosynthesis. In terms of biological role, catalyzes the condensation reaction of fatty acid synthesis by the addition to an acyl acceptor of two carbons from malonyl-ACP. Catalyzes the first condensation reaction which initiates fatty acid synthesis and may therefore play a role in governing the total rate of fatty acid production. Possesses both acetoacetyl-ACP synthase and acetyl transacylase activities. Its substrate specificity determines the biosynthesis of branched-chain and/or straight-chain of fatty acids. This Clostridium botulinum (strain Kyoto / Type A2) protein is Beta-ketoacyl-[acyl-carrier-protein] synthase III.